The following is a 589-amino-acid chain: Lipoprotein LpqB (589 aa).

Positions 1 to 20 are cleaved as a signal peptide; it reads MMRGVLVIMRLLCLGMLFTG. The N-palmitoyl cysteine moiety is linked to residue cysteine 21. Cysteine 21 carries S-diacylglycerol cysteine lipidation.

Belongs to the LpqB lipoprotein family.

It is found in the cell membrane. The polypeptide is Lipoprotein LpqB (Mycobacterium leprae (strain TN)).